Here is a 77-residue protein sequence, read N- to C-terminus: Translation initiation factor IF-1, chloroplastic (77 aa).

The S1-like domain maps to 1 to 71 (MKEQKLIHEG…TRGRIIYRLR (71 aa)).

The protein belongs to the IF-1 family. In terms of assembly, component of the 30S ribosomal translation pre-initiation complex which assembles on the 30S ribosome in the order IF-2 and IF-3, IF-1 and N-formylmethionyl-tRNA(fMet); mRNA recruitment can occur at any time during PIC assembly.

It is found in the plastid. It localises to the chloroplast. Functionally, one of the essential components for the initiation of protein synthesis. Stabilizes the binding of IF-2 and IF-3 on the 30S subunit to which N-formylmethionyl-tRNA(fMet) subsequently binds. Helps modulate mRNA selection, yielding the 30S pre-initiation complex (PIC). Upon addition of the 50S ribosomal subunit IF-1, IF-2 and IF-3 are released leaving the mature 70S translation initiation complex. This chain is Translation initiation factor IF-1, chloroplastic, found in Acorus calamus var. americanus (American sweet flag).